We begin with the raw amino-acid sequence, 555 residues long: Urocanate hydratase (555 aa).

NAD(+) is bound by residues 52-53 (GG), Gln-130, 176-178 (GMG), Glu-196, Arg-201, 242-243 (NA), 263-267 (QTSAH), 273-274 (YL), and Tyr-322. The active site involves Cys-410. NAD(+) is bound at residue Gly-492.

Belongs to the urocanase family. NAD(+) serves as cofactor.

It localises to the cytoplasm. It carries out the reaction 4-imidazolone-5-propanoate = trans-urocanate + H2O. It participates in amino-acid degradation; L-histidine degradation into L-glutamate; N-formimidoyl-L-glutamate from L-histidine: step 2/3. Its function is as follows. Catalyzes the conversion of urocanate to 4-imidazolone-5-propionate. The sequence is that of Urocanate hydratase from Shewanella sp. (strain W3-18-1).